The sequence spans 479 residues: Anaerobic nitric oxide reductase flavorubredoxin (479 aa).

Positions Leu30 to Ile210 are zinc metallo-hydrolase. 6 residues coordinate Fe cation: His79, Glu81, Asp83, His147, Asp166, and His227. Residues Ile254–Ala393 enclose the Flavodoxin-like domain. FMN-binding positions include Thr260–Asn264 and Ala342–Leu369. Residues Gly423–Leu474 form the Rubredoxin-like domain. 4 residues coordinate Fe cation: Cys428, Cys431, Cys461, and Cys464.

It in the N-terminal section; belongs to the zinc metallo-hydrolase group 3 family. As to quaternary structure, homotetramer. Fe cation is required as a cofactor. Requires FMN as cofactor.

It localises to the cytoplasm. The protein operates within nitrogen metabolism; nitric oxide reduction. In terms of biological role, anaerobic nitric oxide reductase; uses NADH to detoxify nitric oxide (NO), protecting several 4Fe-4S NO-sensitive enzymes. Has at least 2 reductase partners, only one of which (NorW, flavorubredoxin reductase) has been identified. NO probably binds to the di-iron center; electrons enter from the NorW at rubredoxin and are transferred sequentially to the FMN center and the di-iron center. Also able to function as an aerobic oxygen reductase. In Salmonella paratyphi A (strain ATCC 9150 / SARB42), this protein is Anaerobic nitric oxide reductase flavorubredoxin.